Reading from the N-terminus, the 446-residue chain is Probable arogenate/prephenate dehydrogenase (446 aa).

The region spanning 6 to 288 (LTISIIGGTD…SEAKRGAYYS (283 aa)) is the Prephenate/arogenate dehydrogenase domain.

This sequence in the N-terminal section; belongs to the prephenate/arogenate dehydrogenase family.

This chain is Probable arogenate/prephenate dehydrogenase, found in Methanocaldococcus jannaschii (strain ATCC 43067 / DSM 2661 / JAL-1 / JCM 10045 / NBRC 100440) (Methanococcus jannaschii).